Here is a 172-residue protein sequence, read N- to C-terminus: Adenine phosphoribosyltransferase (172 aa).

The protein belongs to the purine/pyrimidine phosphoribosyltransferase family. In terms of assembly, homodimer.

Its subcellular location is the cytoplasm. The enzyme catalyses AMP + diphosphate = 5-phospho-alpha-D-ribose 1-diphosphate + adenine. It functions in the pathway purine metabolism; AMP biosynthesis via salvage pathway; AMP from adenine: step 1/1. Catalyzes a salvage reaction resulting in the formation of AMP, that is energically less costly than de novo synthesis. This Staphylococcus carnosus (strain TM300) protein is Adenine phosphoribosyltransferase.